A 245-amino-acid chain; its full sequence is Dehydrogenase/reductase SDR family member 6 (245 aa).

NAD(+) contacts are provided by residues 16-18 (QGI), aspartate 37, and aspartate 58. Residue arginine 144 coordinates substrate. Tyrosine 147 acts as the Proton acceptor in catalysis. Residues lysine 151 and 180–184 (VDTPS) contribute to the NAD(+) site. Positions 188 and 205 each coordinate substrate.

It belongs to the short-chain dehydrogenases/reductases (SDR) family. As to quaternary structure, homotetramer. As to expression, detected in liver, spleen and macrophages. Widely expressed.

It is found in the cytoplasm. The enzyme catalyses cis-4-hydroxy-L-proline + NAD(+) = 4-oxo-L-proline + NADH + H(+). It catalyses the reaction (R)-3-hydroxybutanoate + NAD(+) = acetoacetate + NADH + H(+). It functions in the pathway amino-acid metabolism. The protein operates within siderophore biosynthesis. NAD(H)-dependent dehydrogenase/reductase with a preference for cyclic substrates. Catalyzes stereoselective conversion of 4-oxo-L-proline to cis-4-hydroxy-L-proline, likely a detoxification mechanism for ketoprolines. Mediates the formation of 2,5-dihydroxybenzoate (2,5-DHBA), a siderophore that chelates free cytoplasmic iron and associates with LCN2, thereby regulating iron transport and homeostasis while protecting cells against free radical-induced oxidative stress. The iron-siderophore complex is imported into mitochondria, providing an iron source for mitochondrial metabolic processes in particular heme synthesis. May act as a 3-hydroxybutyrate dehydrogenase. Its function is as follows. (Microbial infection) May play a role in susceptibility to bacterial infection by providing an assimilable source of iron that is exploited by pathogenic bacteria. Host iron-siderophore complexes can be used by bacteria to promote their own growth and pathogenicity. This chain is Dehydrogenase/reductase SDR family member 6, found in Mus musculus (Mouse).